We begin with the raw amino-acid sequence, 341 residues long: Cell division protein FtsQ (341 aa).

Residues 1–126 (MTETDEGAPV…VARGVVRGLK (126 aa)) lie on the Cytoplasmic side of the membrane. The chain crosses the membrane as a helical span at residues 127–147 (TLFATVMFSIAGFGLGLALYV). Over 148-341 (TPAMSVRNIV…VSSPDLPTVK (194 aa)) the chain is Extracellular. The region spanning 151–219 (MSVRNIVVTG…SALRITIVER (69 aa)) is the POTRA domain.

It belongs to the FtsQ/DivIB family. FtsQ subfamily.

The protein resides in the cell membrane. Functionally, essential cell division protein. In Mycobacterium leprae (strain Br4923), this protein is Cell division protein FtsQ.